An 800-amino-acid chain; its full sequence is Phenylalanine--tRNA ligase beta subunit (800 aa).

A tRNA-binding domain is found at 39–154 (TKDIKNLVVG…EAQVPGTDAL (116 aa)). A B5 domain is found at 408–483 (AFITPIDITA…RIYGYDDIPS (76 aa)). Mg(2+) contacts are provided by Asp461, Asp467, Glu470, and Glu471. The 93-residue stretch at 708 to 800 (PRFPGMSRDI…ALIEQGAVIR (93 aa)) folds into the FDX-ACB domain.

This sequence belongs to the phenylalanyl-tRNA synthetase beta subunit family. Type 1 subfamily. As to quaternary structure, tetramer of two alpha and two beta subunits. Mg(2+) serves as cofactor.

It localises to the cytoplasm. The enzyme catalyses tRNA(Phe) + L-phenylalanine + ATP = L-phenylalanyl-tRNA(Phe) + AMP + diphosphate + H(+). In Staphylococcus aureus (strain COL), this protein is Phenylalanine--tRNA ligase beta subunit.